Reading from the N-terminus, the 378-residue chain is tRNA-specific 2-thiouridylase MnmA (378 aa).

ATP-binding positions include 6–13 and L32; that span reads AMSGGVDS. The Nucleophile role is filled by C101. Cysteines 101 and 199 form a disulfide. Residue G125 participates in ATP binding. Positions 148 to 150 are interaction with tRNA; sequence KDQ. The active-site Cysteine persulfide intermediate is C199.

Belongs to the MnmA/TRMU family.

Its subcellular location is the cytoplasm. The enzyme catalyses S-sulfanyl-L-cysteinyl-[protein] + uridine(34) in tRNA + AH2 + ATP = 2-thiouridine(34) in tRNA + L-cysteinyl-[protein] + A + AMP + diphosphate + H(+). Functionally, catalyzes the 2-thiolation of uridine at the wobble position (U34) of tRNA, leading to the formation of s(2)U34. This chain is tRNA-specific 2-thiouridylase MnmA, found in Renibacterium salmoninarum (strain ATCC 33209 / DSM 20767 / JCM 11484 / NBRC 15589 / NCIMB 2235).